Here is a 242-residue protein sequence, read N- to C-terminus: NAD-dependent protein deacetylase (242 aa).

The region spanning 1-242 (MQQFEEVHSI…EFVEGLSSRK (242 aa)) is the Deacetylase sirtuin-type domain. Residues alanine 23, threonine 27, phenylalanine 34, arginine 35, glutamine 102, isoleucine 104, aspartate 105, and histidine 120 each contribute to the NAD(+) site. Phenylalanine 34 is a nicotinamide binding site. 2 residues coordinate nicotinamide: isoleucine 104 and aspartate 105. The Proton acceptor role is filled by histidine 120. Zn(2+) contacts are provided by cysteine 128, cysteine 131, cysteine 148, and cysteine 151. Positions 187, 188, 213, and 231 each coordinate NAD(+).

Belongs to the sirtuin family. Class U subfamily. It depends on Zn(2+) as a cofactor.

It localises to the cytoplasm. It carries out the reaction N(6)-acetyl-L-lysyl-[protein] + NAD(+) + H2O = 2''-O-acetyl-ADP-D-ribose + nicotinamide + L-lysyl-[protein]. NAD-dependent protein deacetylase which modulates the activities of several enzymes which are inactive in their acetylated form. This is NAD-dependent protein deacetylase from Bacillus cereus (strain ATCC 10987 / NRS 248).